The chain runs to 703 residues: Ion-translocating oxidoreductase complex subunit C (703 aa).

2 consecutive 4Fe-4S ferredoxin-type domains span residues 369–398 (YDPQ…QQMY) and 408–437 (KSNQ…IQYF). Residues cysteine 378, cysteine 381, cysteine 384, cysteine 388, cysteine 417, cysteine 420, cysteine 423, and cysteine 427 each contribute to the [4Fe-4S] cluster site. Disordered stretches follow at residues 467 to 542 (RLER…PDNS) and 555 to 680 (RQQT…PKKA). Positions 485–497 (ARREELAANKGED) are enriched in basic and acidic residues. Positions 559 to 577 (NGNSPVSSASNSDSATISA) are enriched in low complexity. Polar residues predominate over residues 578-592 (DNTHSTPKTAQNQTA). Composition is skewed to low complexity over residues 598–629 (AAVA…TEKT) and 641–669 (AAVA…EKTA).

The protein belongs to the 4Fe4S bacterial-type ferredoxin family. RnfC subfamily. In terms of assembly, the complex is composed of six subunits: RnfA, RnfB, RnfC, RnfD, RnfE and RnfG. It depends on [4Fe-4S] cluster as a cofactor.

The protein resides in the cell inner membrane. In terms of biological role, part of a membrane-bound complex that couples electron transfer with translocation of ions across the membrane. The polypeptide is Ion-translocating oxidoreductase complex subunit C (Actinobacillus succinogenes (strain ATCC 55618 / DSM 22257 / CCUG 43843 / 130Z)).